The primary structure comprises 276 residues: ATP synthase subunit a (276 aa).

7 helical membrane passes run 49–69, 109–129, 137–157, 173–193, 203–223, 232–252, and 253–273; these read KPML…FAAA, YLFT…IPFI, SGMV…AGIS, GIRG…NILV, FANM…GEYI, APVG…EMLI, and QFLQ…GAVA.

The protein belongs to the ATPase A chain family. As to quaternary structure, F-type ATPases have 2 components, CF(1) - the catalytic core - and CF(0) - the membrane proton channel. CF(1) has five subunits: alpha(3), beta(3), gamma(1), delta(1), epsilon(1). CF(0) has three main subunits: a(1), b(2) and c(9-12). The alpha and beta chains form an alternating ring which encloses part of the gamma chain. CF(1) is attached to CF(0) by a central stalk formed by the gamma and epsilon chains, while a peripheral stalk is formed by the delta and b chains.

It is found in the cell membrane. Functionally, key component of the proton channel; it plays a direct role in the translocation of protons across the membrane. In Nocardioides sp. (strain ATCC BAA-499 / JS614), this protein is ATP synthase subunit a.